The sequence spans 921 residues: Probable glucan 1,3-alpha-glucosidase (921 aa).

Residues 1–20 (MRSLLFVLSLICFCSQTALS) form the signal peptide. Residue aspartate 512 is the Nucleophile of the active site. Glutamate 515 is an active-site residue. The active-site Proton donor is aspartate 588. N-linked (GlcNAc...) asparagine glycosylation is found at asparagine 689 and asparagine 804.

This sequence belongs to the glycosyl hydrolase 31 family. In terms of assembly, heterodimer of a catalytic alpha subunit (PSL5) and a beta subunit (PSL4). Expressed in roots, rosette leaves, leaf blades, mature stems, cauline leaves, flower buds, flowers and siliques.

Its subcellular location is the endoplasmic reticulum. It carries out the reaction Hydrolysis of terminal (1-&gt;3)-alpha-D-glucosidic links in (1-&gt;3)-alpha-D-glucans.. The protein operates within glycan metabolism; N-glycan metabolism. Cleaves sequentially the 2 innermost alpha-1,3-linked glucose residues from the Glc(2)Man(9)GlcNAc(2) oligosaccharide precursor of immature glycoproteins. Essential for stable accumulation of the receptor EFR that determines the specific perception of bacterial elongation factor Tu (EF-Tu), a potent elicitor of the defense response to pathogen-associated molecular patterns (PAMPs). Required for sustained activation of EFR-mediated signaling, but not receptor FLS2-mediated signaling elicited by the bacterial flagellin flg22. This chain is Probable glucan 1,3-alpha-glucosidase (PSL5), found in Arabidopsis thaliana (Mouse-ear cress).